The primary structure comprises 262 residues: Undecaprenyl-diphosphatase (262 aa).

8 consecutive transmembrane segments (helical) span residues 15 to 35 (LTEW…IILL), 38 to 58 (SSAA…IVAF), 91 to 111 (LYIL…AKYV), 114 to 134 (IFGS…LLYS), 149 to 169 (ALIV…RSGA), 189 to 209 (FLLS…VSPA), 219 to 239 (VGLL…LSII), and 242 to 262 (GRLH…LSLL).

It belongs to the UppP family.

The protein resides in the cell membrane. The enzyme catalyses di-trans,octa-cis-undecaprenyl diphosphate + H2O = di-trans,octa-cis-undecaprenyl phosphate + phosphate + H(+). Functionally, catalyzes the dephosphorylation of undecaprenyl diphosphate (UPP). The chain is Undecaprenyl-diphosphatase from Korarchaeum cryptofilum (strain OPF8).